Reading from the N-terminus, the 279-residue chain is Tryptophan synthase alpha chain (279 aa).

Active-site proton acceptor residues include Glu-50 and Asp-61.

The protein belongs to the TrpA family. As to quaternary structure, tetramer of two alpha and two beta chains.

It catalyses the reaction (1S,2R)-1-C-(indol-3-yl)glycerol 3-phosphate + L-serine = D-glyceraldehyde 3-phosphate + L-tryptophan + H2O. It participates in amino-acid biosynthesis; L-tryptophan biosynthesis; L-tryptophan from chorismate: step 5/5. The alpha subunit is responsible for the aldol cleavage of indoleglycerol phosphate to indole and glyceraldehyde 3-phosphate. In Brucella suis (strain ATCC 23445 / NCTC 10510), this protein is Tryptophan synthase alpha chain.